A 316-amino-acid chain; its full sequence is UDP-N-acetylenolpyruvoylglucosamine reductase (316 aa).

Positions 27–225 (VGGKAERFYR…KTAINALLKK (199 aa)) constitute an FAD-binding PCMH-type domain. The active site involves R190. The active-site Proton donor is the S239. E309 is an active-site residue.

The protein belongs to the MurB family. FAD serves as cofactor.

It is found in the cytoplasm. The enzyme catalyses UDP-N-acetyl-alpha-D-muramate + NADP(+) = UDP-N-acetyl-3-O-(1-carboxyvinyl)-alpha-D-glucosamine + NADPH + H(+). It participates in cell wall biogenesis; peptidoglycan biosynthesis. In terms of biological role, cell wall formation. This is UDP-N-acetylenolpyruvoylglucosamine reductase from Coxiella burnetii (strain Dugway 5J108-111).